The chain runs to 265 residues: Orotidine 5'-phosphate decarboxylase (265 aa).

Residues Asp-38, 60-62 (KTH), 91-100 (DRKFADIGNT), Tyr-213, and Arg-232 each bind substrate. The active-site Proton donor is the Lys-93.

The protein belongs to the OMP decarboxylase family.

The catalysed reaction is orotidine 5'-phosphate + H(+) = UMP + CO2. It participates in pyrimidine metabolism; UMP biosynthesis via de novo pathway; UMP from orotate: step 2/2. This is Orotidine 5'-phosphate decarboxylase (pyrG) from Rhizopus oryzae (Mucormycosis agent).